Consider the following 568-residue polypeptide: Phosphoprotein (568 aa).

Disordered regions lie at residues 1–23 and 38–320; these read MDQDAFILKEDSEVEREAPGGRE and SEPT…GIGE. Over residues 7 to 20 the composition is skewed to basic and acidic residues; sequence ILKEDSEVEREAPG. Residues 33–41 form an N0 binding region; sequence DAVLSSEPT. Polar residues predominate over residues 50–59; the sequence is LHNTINTPQG. Serine 68 carries the post-translational modification Phosphoserine; by host. Over residues 83–101 the composition is skewed to basic and acidic residues; that stretch reads RSGEESRVSGRTSKPEAEA. Serine 125 carries the phosphoserine; by host modification. Residues 150–168 are compositionally biased toward basic and acidic residues; the sequence is GIEDENREMAAHPDKRGED. Residues 191 to 206 show a composition bias toward polar residues; the sequence is ASNNGRSMEPGSSHSA. Serine 192, serine 249, serine 257, and serine 260 each carry phosphoserine; by host. The multimerization stretch occupies residues 344–411; the sequence is FESSRDASYV…SFRDIYKRFS (68 aa). Residues 364 to 429 adopt a coiled-coil conformation; it reads YAEMTFNVCG…LLMSNLSTLH (66 aa). The segment at 412 to 445 is l protein binding; sequence EYQKEQNSLLMSNLSTLHIITDRGGKTDNTDSLT. Residues serine 447 and serine 449 each carry the phosphoserine; by host modification. Positions 479–568 are interaction with the nucleocapsid (N-RNA); the sequence is DLIREDEFRD…VEEDIESLTN (90 aa). The interval 496-516 is disordered; that stretch reads QERDTEPRASNASRLLPSKEK. Residues 547–566 are formation of N-RNA complex involved in transcription and replication; that stretch reads KTDQEVKAVMELVEEDIESL.

The protein belongs to the respirovirus P protein family. Homotetramer. Interacts (via multimerization domain) with polymerase L; this interaction forms the polymerase complex. Interacts (via N-terminus) with N0; this interaction allows P to chaperon N0 before encapsidation and form the N-P complex. Interacts (via C-terminus) with N-RNA template; this interaction positions the polymerase on the template. In terms of processing, phosphorylated by PKC/PRKCZ, and other unknown kinases. Phosphorylation is necessary for viral transcription and replication. The N-terminus contains the majority of phosphorylated sites. Ser-249 is the major site of phosphorylation, but is not necessary for most functions.

The protein localises to the host cytoplasm. Essential cofactor of the RNA polymerase L that plays a central role in the transcription and replication by forming the polymerase complex with RNA polymerase L and recruiting L to the genomic N-RNA template for RNA synthesis. Also plays a central role in the encapsidation of nascent RNA chains by forming the encapsidation complex with the nucleocapsid protein N (N-P complex). Acts as a chaperone for newly synthesized free N protein, so-called N0, allowing encapsidation of nascent RNA chains during replication. The nucleoprotein protein N prevents excessive phosphorylation of P, which leads to down-regulation of viral transcription/ replication. Participates, together with N, in the formation of viral factories (viroplasms), which are large inclusions in the host cytoplasm where replication takes place. Recruits host PI4KB and remodel the host endoplasmic reticulum membrane to form viral replication factories. This chain is Phosphoprotein (P/V/C), found in Cavia cutleri (Guinea pig).